Reading from the N-terminus, the 154-residue chain is Lipoprotein signal peptidase (154 aa).

Transmembrane regions (helical) follow at residues 55–75 (GHMW…IYIM) and 84–104 (LFSI…IDRV). Active-site residues include Asp-111 and Asp-129. A helical membrane pass occupies residues 124-144 (IFNVADASLSVGVVLMLVYVF).

The protein belongs to the peptidase A8 family.

It is found in the cell membrane. The enzyme catalyses Release of signal peptides from bacterial membrane prolipoproteins. Hydrolyzes -Xaa-Yaa-Zaa-|-(S,diacylglyceryl)Cys-, in which Xaa is hydrophobic (preferably Leu), and Yaa (Ala or Ser) and Zaa (Gly or Ala) have small, neutral side chains.. The protein operates within protein modification; lipoprotein biosynthesis (signal peptide cleavage). This protein specifically catalyzes the removal of signal peptides from prolipoproteins. The chain is Lipoprotein signal peptidase from Listeria welshimeri serovar 6b (strain ATCC 35897 / DSM 20650 / CCUG 15529 / CIP 8149 / NCTC 11857 / SLCC 5334 / V8).